The sequence spans 219 residues: GTP-binding protein Rab-3D (219 aa).

N-acetylalanine is present on Ala2. Residue 29–37 (GNSSVGKTS) coordinates GDP. GTP is bound by residues Ser31, Ser32, Val33, Gly34, Lys35, Thr36, Ser37, Pro49, and Ser53. Thr36 lines the Mg(2+) pocket. The Switch 1 signature appears at 49-58 (PAFVSTVGID). Mg(2+) contacts are provided by Thr54 and Asp77. Gly80 lines the GTP pocket. Positions 80–96 (GQERYRTITTAYYRGAM) match the Switch 2 motif. Position 86 is a phosphothreonine (Thr86). The GTP site is built by Asn135, Lys136, Asp138, Ala166, and Lys167. Residues 135-138 (NKCD) and 165-167 (SAK) each bind GDP. Phosphoserine is present on Ser190. The interval 190-219 (SLEPSSSPGSNGKGPALGDTPPPQPSSCGC) is disordered. Over residues 193 to 203 (PSSSPGSNGKG) the composition is skewed to low complexity. Pro residues predominate over residues 209 to 219 (TPPPQPSSCGC). S-geranylgeranyl cysteine attachment occurs at residues Cys217 and Cys219. Position 219 is a cysteine methyl ester; partial (Cys219).

This sequence belongs to the small GTPase superfamily. Rab family. In terms of assembly, interacts with RIMS1, RIMS2, RPH3A and RPH3AL. Interacts with RAB3IP. The GTP-bound form interacts with REP15. Interacts with CHM; phosphorylation at Thr-86 disrupts this interaction. Interacts with MADD (via uDENN domain); the GTP-bound form is preferred for interaction. Mg(2+) serves as cofactor. In terms of processing, in fetal glands the majority of the proteins are methylated, whereas in neonatal and adult glands, only 50% are methylated. Post-translationally, phosphorylation of Thr-86 in the switch II region by LRRK2 prevents the association of RAB regulatory proteins, including CHM. As to expression, highest levels found in lung.

Its subcellular location is the cell membrane. It carries out the reaction GTP + H2O = GDP + phosphate + H(+). Its activity is regulated as follows. Regulated by guanine nucleotide exchange factors (GEFs) which promote the exchange of bound GDP for free GTP. Regulated by GTPase activating proteins (GAPs) which increase the GTP hydrolysis activity. Inhibited by GDP dissociation inhibitors (GDIs) which prevent Rab-GDP dissociation. The small GTPases Rab are key regulators of intracellular membrane trafficking, from the formation of transport vesicles to their fusion with membranes. Rabs cycle between an inactive GDP-bound form and an active GTP-bound form that is able to recruit to membranes different sets of downstream effectors directly responsible for vesicle formation, movement, tethering and fusion. RAB3D may be involved in the insulin-induced exocytosis of GLUT4-containing vesicles in adipocytes. In Rattus norvegicus (Rat), this protein is GTP-binding protein Rab-3D.